Here is a 559-residue protein sequence, read N- to C-terminus: 3-phosphoinositide-dependent protein kinase 1 (559 aa).

Phosphotyrosine; by SRC and INSR is present on Tyr-9. At Ser-25 the chain carries Phosphoserine. The disordered stretch occupies residues Ser-25–Glu-83. A compositionally biased stretch (low complexity) spans Pro-35 to Gly-44. Positions Val-45–Gly-54 are enriched in polar residues. Residues Phe-85–Phe-345 form the Protein kinase domain. ATP contacts are provided by residues Ser-95–Ser-97 and Lys-114. Residues Leu-116 to Phe-160 are PIF-pocket. Residues Ser-163–Ala-165 and Glu-169 each bind ATP. The active-site Proton acceptor is Asp-208. Residues Glu-212 and Asp-226 each contribute to the ATP site. The residue at position 244 (Ser-244) is a Phosphoserine. Residue Lys-307 is modified to N6-acetyllysine. Thr-357 is modified (phosphothreonine; by MELK). A phosphotyrosine; by SRC and INSR mark is found at Tyr-376 and Tyr-379. Ser-396 carries the post-translational modification Phosphoserine. A Phosphoserine; by MAP3K5 modification is found at Ser-397. A Phosphoserine modification is found at Ser-399. Ser-401 carries the phosphoserine; by MAP3K5 modification. Ser-413 carries the post-translational modification Phosphoserine. The PH domain occupies Lys-462–Asn-553. Residue Ser-504 is modified to Phosphoserine; by PKC/PRKCQ. Thr-516 carries the post-translational modification Phosphothreonine; by autocatalysis. Position 532 is a phosphoserine; by PKC/PRKCQ (Ser-532).

The protein belongs to the protein kinase superfamily. AGC Ser/Thr protein kinase family. PDPK1 subfamily. Homodimer in its autoinhibited state. Active as monomer. Interacts with NPRL2, PAK1, PTK2B, GRB14, STRAP and IKKB. The Tyr-9 phosphorylated form interacts with SRC, RASA1 and CRK (via their SH2 domains). Interacts with SGK3 in a phosphorylation-dependent manner. The tyrosine-phosphorylated form interacts with PTPN6. The Ser-244 phosphorylated form interacts with YWHAH and YWHAQ. Binds INSR in response to insulin. Interacts (via PH domain) with SMAD3, SMAD4 and SMAD7. Interacts with PKN2; the interaction stimulates PDPK1 autophosphorylation, its PI(3,4,5)P3-dependent kinase activity toward 'Ser-473' of AKT1 but also activates its kinase activity toward PRKCD and PRKCZ. Interacts with PKN1 (via C-terminus) and PPARG. Post-translationally, phosphorylation on Ser-244 in the activation loop is required for full activity. PDPK1 itself can autophosphorylate Ser-244, leading to its own activation. Autophosphorylation is inhibited by the apoptotic C-terminus cleavage product of PKN2. Tyr-9 phosphorylation is critical for stabilization of both PDPK1 and the PDPK1/SRC complex via HSP90-mediated protection of PDPK1 degradation. Angiotensin II stimulates the tyrosine phosphorylation of PDPK1 in vascular smooth muscle in a calcium- and SRC-dependent manner. Phosphorylated on Tyr-9, Tyr-376 and Tyr-379 by INSR in response to insulin. Palmitate negatively regulates autophosphorylation at Ser-244 and palmitate-induced phosphorylation at Ser-532 and Ser-504 by PKC/PRKCQ negatively regulates its ability to phosphorylate PKB/AKT1. Phosphorylation at Thr-357 by MELK partially inhibits kinase activity, the inhibition is cooperatively enhanced by phosphorylation at Ser-397 and Ser-401 by MAP3K5. Monoubiquitinated in the kinase domain, deubiquitinated by USP4. As to expression, highly expressed in heart, brain, liver and testis, also expressed in embryonic cells.

It is found in the cytoplasm. Its subcellular location is the nucleus. The protein resides in the cell membrane. It localises to the cell junction. The protein localises to the focal adhesion. It catalyses the reaction L-seryl-[protein] + ATP = O-phospho-L-seryl-[protein] + ADP + H(+). It carries out the reaction L-threonyl-[protein] + ATP = O-phospho-L-threonyl-[protein] + ADP + H(+). Its activity is regulated as follows. Homodimerization regulates its activity by maintaining the kinase in an autoinhibitory conformation. NPRL2 down-regulates its activity by interfering with tyrosine phosphorylation at the Tyr-9, Tyr-376 and Tyr-379 residues. The 14-3-3 protein YWHAQ acts as a negative regulator by association with the residues surrounding the Ser-244 residue. STRAP positively regulates its activity by enhancing its autophosphorylation and by stimulating its dissociation from YWHAQ. SMAD2, SMAD3, SMAD4 and SMAD7 also positively regulate its activity by stimulating its dissociation from YWHAQ. Activated by phosphorylation on Tyr-9, Tyr-376 and Tyr-379 by INSR in response to insulin. Its function is as follows. Serine/threonine kinase which acts as a master kinase, phosphorylating and activating a subgroup of the AGC family of protein kinases. Its targets include: protein kinase B (PKB/AKT1, PKB/AKT2, PKB/AKT3), p70 ribosomal protein S6 kinase (RPS6KB1), p90 ribosomal protein S6 kinase (RPS6KA1, RPS6KA2 and RPS6KA3), cyclic AMP-dependent protein kinase (PRKACA), protein kinase C (PRKCD and PRKCZ), serum and glucocorticoid-inducible kinase (SGK1, SGK2 and SGK3), p21-activated kinase-1 (PAK1), TSSK3, protein kinase PKN (PKN1 and PKN2). Plays a central role in the transduction of signals from insulin by providing the activating phosphorylation to PKB/AKT1, thus propagating the signal to downstream targets controlling cell proliferation and survival, as well as glucose and amino acid uptake and storage. Negatively regulates the TGF-beta-induced signaling by: modulating the association of SMAD3 and SMAD7 with TGF-beta receptor, phosphorylating SMAD2, SMAD3, SMAD4 and SMAD7, preventing the nuclear translocation of SMAD3 and SMAD4 and the translocation of SMAD7 from the nucleus to the cytoplasm in response to TGF-beta. Activates PPARG transcriptional activity and promotes adipocyte differentiation. Activates the NF-kappa-B pathway via phosphorylation of IKKB. The tyrosine phosphorylated form is crucial for the regulation of focal adhesions by angiotensin II. Controls proliferation, survival, and growth of developing pancreatic cells. Participates in the regulation of Ca(2+) entry and Ca(2+)-activated K(+) channels of mast cells. Essential for the motility of vascular endothelial cells (ECs) and is involved in the regulation of their chemotaxis. Plays a critical role in cardiac homeostasis by serving as a dual effector for cell survival and beta-adrenergic response. Plays an important role during thymocyte development by regulating the expression of key nutrient receptors on the surface of pre-T cells and mediating Notch-induced cell growth and proliferative responses. Provides negative feedback inhibition to toll-like receptor-mediated NF-kappa-B activation in macrophages. The sequence is that of 3-phosphoinositide-dependent protein kinase 1 (Pdpk1) from Mus musculus (Mouse).